The sequence spans 336 residues: Fructose-1,6-bisphosphatase class 1 (336 aa).

E90, D112, L114, and D115 together coordinate Mg(2+). Substrate is bound by residues 115–118, N207, and K273; that span reads DGSS. A Mg(2+)-binding site is contributed by E279.

It belongs to the FBPase class 1 family. Homotetramer. The cofactor is Mg(2+).

It is found in the cytoplasm. It carries out the reaction beta-D-fructose 1,6-bisphosphate + H2O = beta-D-fructose 6-phosphate + phosphate. It participates in carbohydrate biosynthesis; gluconeogenesis. The sequence is that of Fructose-1,6-bisphosphatase class 1 from Xanthomonas oryzae pv. oryzae (strain PXO99A).